The primary structure comprises 634 residues: Chaperone protein HtpG (634 aa).

Residues 1–345 are a; substrate-binding; the sequence is MEHQQNHTFS…SNDLPLNVSR (345 aa). The tract at residues 346-562 is b; sequence EILQDTRVTA…NDDMSTQMAK (217 aa). Residues 563–634 are c; sequence LMAQMGQPVP…VGRINKLLLA (72 aa).

It belongs to the heat shock protein 90 family. In terms of assembly, homodimer.

It is found in the cytoplasm. Molecular chaperone. Has ATPase activity. The chain is Chaperone protein HtpG from Psychromonas ingrahamii (strain DSM 17664 / CCUG 51855 / 37).